The primary structure comprises 361 residues: S-adenosylmethionine-dependent nucleotide dehydratase RSAD2 (361 aa).

The Radical SAM core domain occupies Pro69 to Leu289. Residues Cys83, Cys87, and Cys90 each coordinate [4Fe-4S] cluster. Lys197 is modified (N6-acetyllysine). Lys206 participates in a covalent cross-link: Glycyl lysine isopeptide (Lys-Gly) (interchain with G-Cter in ubiquitin).

It belongs to the radical SAM superfamily. RSAD2 family. In terms of assembly, homodimer. Interacts with IRAK1 and TRAF6. Interacts with FPPS. Interacts with HADHB. Interacts (via C-terminus) with VAPA/VAP33 (via C-terminus). As to quaternary structure, (Microbial infection) Interacts with human cytomegalovirus/HHV-5 protein vMIA/UL37; this interaction results in RSAD2/viperin relocalization from the endoplasmic reticulum to the mitochondria. (Microbial infection) Interacts (via N-terminus) with enterovirus A71 protein 2C; this interaction inhibits viral replication. In terms of assembly, (Microbial infection) Interacts with herpes simplex virus 1/HHV-1 glycoprotein D; this interaction inhibits HHV-1 replication by facilitating IRF7-mediated IFN-beta production. Requires [4Fe-4S] cluster as cofactor. In terms of processing, acetylated by HAT1. HAT1-mediated acetylation of Lys-197 in turn recruits UBE4A that stimulates RSAD2 polyubiquitination leading to proteasomal degradation. Post-translationally, 'Lys-6'-linked polyubiquitination at Lys-206 leads to RSAD2 protein degradation.

Its subcellular location is the endoplasmic reticulum membrane. It is found in the golgi apparatus. It localises to the endoplasmic reticulum. The protein resides in the lipid droplet. The protein localises to the mitochondrion. Its subcellular location is the mitochondrion inner membrane. It is found in the mitochondrion outer membrane. The catalysed reaction is CTP + AH2 + S-adenosyl-L-methionine = 3'-deoxy-3',4'-didehydro-CTP + 5'-deoxyadenosine + L-methionine + A + H2O + H(+). IRAK1 and TRAF6 synergistically activate RSAD2 increasing its activity with CTP as substrate about 10-fold. In terms of biological role, interferon-inducible antiviral protein which plays a major role in the cell antiviral state induced by type I and type II interferon. Catalyzes the conversion of cytidine triphosphate (CTP) to 3'-deoxy-3',4'-didehydro-CTP (ddhCTP) via a SAM-dependent radical mechanism. In turn, ddhCTP acts as a chain terminator for the RNA-dependent RNA polymerases from multiple viruses and directly inhibits viral replication. Therefore, inhibits a wide range of DNA and RNA viruses, including human cytomegalovirus (HCMV), hepatitis C virus (HCV), west Nile virus (WNV), dengue virus, sindbis virus, influenza A virus, sendai virus, vesicular stomatitis virus (VSV), zika virus, and human immunodeficiency virus (HIV-1). Also promotes TLR7 and TLR9-dependent production of IFN-beta production in plasmacytoid dendritic cells (pDCs) by facilitating 'Lys-63'-linked ubiquitination of IRAK1 by TRAF6. Plays a role in CD4+ T-cells activation and differentiation. Facilitates T-cell receptor (TCR)-mediated GATA3 activation and optimal T-helper 2 (Th2) cytokine production by modulating NFKB1 and JUNB activities. Can inhibit secretion of soluble proteins. This chain is S-adenosylmethionine-dependent nucleotide dehydratase RSAD2, found in Homo sapiens (Human).